Reading from the N-terminus, the 563-residue chain is Formate--tetrahydrofolate ligase (563 aa).

ATP is bound at residue 65–72; it reads TPLGEGKT.

The protein belongs to the formate--tetrahydrofolate ligase family.

The catalysed reaction is (6S)-5,6,7,8-tetrahydrofolate + formate + ATP = (6R)-10-formyltetrahydrofolate + ADP + phosphate. It functions in the pathway one-carbon metabolism; tetrahydrofolate interconversion. This is Formate--tetrahydrofolate ligase from Cutibacterium acnes (strain DSM 16379 / KPA171202) (Propionibacterium acnes).